A 519-amino-acid chain; its full sequence is MEKKPYEIKIIQKKAKYHPDPTIVFNHICGSQKQTLLLETAEINKKNDLESIMIIDAALRISSERNHSVQLTALSKNGENILSILKSNLKQKVQMFIQDTSIRLEFPHFQKNLDEDKKIFSLSIFDTFRFIMKFFKNRNKVQKAMFFGGLFSYDLISNFELLPKLKKTQKCPHFCFYLAETLLIVDHQKKTCLIQNSLFTKNSHEQMRVEKRGREIQKKLEASLNSIPVRQEVKNSMLTANMSDEQYCSIIKKLQILIRKGEIFQVVPSRKFFLPCSNPLSAYQKLKKSNPSPYMFFMQDKDFTLFGASPESSLKYDDTTRQVELYPIAGTRPRGRNMDGTLNLDLDSRIELEMRTNHKELAEHLMLVDLARNDLARICEPGSRYVSDLVRVDKYPHVMHLVSRVVGTLKPELDALHAYAACMNMGTLTGAPKIRAMELIAEYEMEQRGSYGGAIGYFTDLGNLDTCITIRSAYVEDNIATIQSGSGIVYNSIPEDEVKEGINKAKRVINAIQHAHHLV.

Residues T40 and 293 to 295 each bind L-tryptophan; that span reads PYM. Residue 330 to 331 participates in chorismate binding; sequence GT. E363 contributes to the Mg(2+) binding site. Residues Y451, R471, 485 to 487, and G487 each bind chorismate; that span reads GSG. A Mg(2+)-binding site is contributed by E500.

The protein belongs to the anthranilate synthase component I family. As to quaternary structure, heterotetramer consisting of two non-identical subunits: a beta subunit (TrpG) and a large alpha subunit (TrpE). Requires Mg(2+) as cofactor.

It catalyses the reaction chorismate + L-glutamine = anthranilate + pyruvate + L-glutamate + H(+). Its pathway is amino-acid biosynthesis; L-tryptophan biosynthesis; L-tryptophan from chorismate: step 1/5. Feedback inhibited by tryptophan. Part of a heterotetrameric complex that catalyzes the two-step biosynthesis of anthranilate, an intermediate in the biosynthesis of L-tryptophan. In the first step, the glutamine-binding beta subunit (TrpG) of anthranilate synthase (AS) provides the glutamine amidotransferase activity which generates ammonia as a substrate that, along with chorismate, is used in the second step, catalyzed by the large alpha subunit of AS (TrpE) to produce anthranilate. In the absence of TrpG, TrpE can synthesize anthranilate directly from chorismate and high concentrations of ammonia. The chain is Anthranilate synthase component 1 (trpE) from Buchnera aphidicola subsp. Diuraphis noxia.